A 420-amino-acid chain; its full sequence is Histidine--tRNA ligase (420 aa).

Belongs to the class-II aminoacyl-tRNA synthetase family. As to quaternary structure, homodimer.

It is found in the cytoplasm. It carries out the reaction tRNA(His) + L-histidine + ATP = L-histidyl-tRNA(His) + AMP + diphosphate + H(+). In Staphylococcus saprophyticus subsp. saprophyticus (strain ATCC 15305 / DSM 20229 / NCIMB 8711 / NCTC 7292 / S-41), this protein is Histidine--tRNA ligase.